The following is a 74-amino-acid chain: UPF0435 protein Bcer98_0391 (74 aa).

This sequence belongs to the UPF0435 family.

The polypeptide is UPF0435 protein Bcer98_0391 (Bacillus cytotoxicus (strain DSM 22905 / CIP 110041 / 391-98 / NVH 391-98)).